A 349-amino-acid polypeptide reads, in one-letter code: Phosphoribosylformylglycinamidine cyclo-ligase (349 aa).

It belongs to the AIR synthase family.

The protein resides in the cytoplasm. The catalysed reaction is 2-formamido-N(1)-(5-O-phospho-beta-D-ribosyl)acetamidine + ATP = 5-amino-1-(5-phospho-beta-D-ribosyl)imidazole + ADP + phosphate + H(+). Its pathway is purine metabolism; IMP biosynthesis via de novo pathway; 5-amino-1-(5-phospho-D-ribosyl)imidazole from N(2)-formyl-N(1)-(5-phospho-D-ribosyl)glycinamide: step 2/2. The polypeptide is Phosphoribosylformylglycinamidine cyclo-ligase (Listeria monocytogenes serotype 4a (strain HCC23)).